We begin with the raw amino-acid sequence, 272 residues long: NADPH-dependent aldehyde reductase 2, chloroplastic (272 aa).

Residues 1–53 (MAAASSVSSPPLCLAGRVAIVTGSSRGIGRAIAIHLAELGARVVVNYSTSPVE) constitute a chloroplast transit peptide. Residue 26–50 (RGIGRAIAIHLAELGARVVVNYSTS) coordinates NADP(+). Residue S165 participates in substrate binding. Y179 serves as the catalytic Proton acceptor.

This sequence belongs to the short-chain dehydrogenases/reductases (SDR) family.

It is found in the plastid. It localises to the chloroplast. In terms of biological role, aldehyde reductase that catalyzes the reduction of the aldehyde carbonyl groups on saturated and alpha,beta-unsaturated aldehydes with more than 5 carbons. No activity on alpha,beta-unsaturated ketones. Can use propionaldehyde, butyraldehyde, methylglyoxal, (e)-2-pentenal, (E)-2-hexenal, (Z)-3-hexenal and (E)-2-nonenal as substrates, but not propenal (acrolein), crotonaldehyde, 2-butanone, 3-buten-2-one or 1-penten-3-one. This is NADPH-dependent aldehyde reductase 2, chloroplastic from Arabidopsis thaliana (Mouse-ear cress).